We begin with the raw amino-acid sequence, 274 residues long: Undecaprenyl-diphosphatase (274 aa).

A run of 7 helical transmembrane segments spans residues 4-24, 46-63, 82-102, 109-129, 184-204, 218-238, and 249-269; these read ILLL…FLPI, LFEI…VWEY, KFIL…LAFG, LFNP…ILWA, ATEF…FYQL, MWAV…RWLL, and FAWY…FGWV.

Belongs to the UppP family.

It localises to the cell inner membrane. The enzyme catalyses di-trans,octa-cis-undecaprenyl diphosphate + H2O = di-trans,octa-cis-undecaprenyl phosphate + phosphate + H(+). In terms of biological role, catalyzes the dephosphorylation of undecaprenyl diphosphate (UPP). Confers resistance to bacitracin. The polypeptide is Undecaprenyl-diphosphatase (Dechloromonas aromatica (strain RCB)).